Reading from the N-terminus, the 291-residue chain is Shikimate dehydrogenase (NADP(+)) (291 aa).

Shikimate is bound by residues 26–28 and serine 73; that span reads SLS. Residue lysine 77 is the Proton acceptor of the active site. Residues asparagine 98 and aspartate 113 each contribute to the shikimate site. NADP(+)-binding positions include 137–141 and valine 238; that span reads GAGGA. A shikimate-binding site is contributed by tyrosine 240. Glycine 261 contributes to the NADP(+) binding site.

The protein belongs to the shikimate dehydrogenase family. Homodimer.

It catalyses the reaction shikimate + NADP(+) = 3-dehydroshikimate + NADPH + H(+). It participates in metabolic intermediate biosynthesis; chorismate biosynthesis; chorismate from D-erythrose 4-phosphate and phosphoenolpyruvate: step 4/7. Involved in the biosynthesis of the chorismate, which leads to the biosynthesis of aromatic amino acids. Catalyzes the reversible NADPH linked reduction of 3-dehydroshikimate (DHSA) to yield shikimate (SA). The sequence is that of Shikimate dehydrogenase (NADP(+)) from Listeria innocua serovar 6a (strain ATCC BAA-680 / CLIP 11262).